The following is a 446-amino-acid chain: Tubulin beta-1 chain (446 aa).

The GTP site is built by Gln-13, Glu-71, Ser-140, Gly-144, Thr-145, Gly-146, Asn-206, and Asn-228. A Mg(2+)-binding site is contributed by Glu-71. The segment at 421–446 (VSEYQQYQDASADDGEEYEEDAPMEE) is disordered. The span at 431-446 (SADDGEEYEEDAPMEE) shows a compositional bias: acidic residues.

The protein belongs to the tubulin family. Dimer of alpha and beta chains. A typical microtubule is a hollow water-filled tube with an outer diameter of 25 nm and an inner diameter of 15 nM. Alpha-beta heterodimers associate head-to-tail to form protofilaments running lengthwise along the microtubule wall with the beta-tubulin subunit facing the microtubule plus end conferring a structural polarity. Microtubules usually have 13 protofilaments but different protofilament numbers can be found in some organisms and specialized cells. Requires Mg(2+) as cofactor.

It localises to the cytoplasm. Its subcellular location is the cytoskeleton. Its function is as follows. Tubulin is the major constituent of microtubules, a cylinder consisting of laterally associated linear protofilaments composed of alpha- and beta-tubulin heterodimers. Microtubules grow by the addition of GTP-tubulin dimers to the microtubule end, where a stabilizing cap forms. Below the cap, tubulin dimers are in GDP-bound state, owing to GTPase activity of alpha-tubulin. The sequence is that of Tubulin beta-1 chain (tub1) from Hypocrea rufa (Trichoderma viride).